Here is a 614-residue protein sequence, read N- to C-terminus: DNA ligase (614 aa).

NAD(+)-binding positions include 29 to 33 (DQDYD) and 73 to 74 (SI). The N6-AMP-lysine intermediate role is filled by K111. Residues R127, E158, and K270 each contribute to the NAD(+) site. C358, C361, C374, and C380 together coordinate Zn(2+). The BRCT domain occupies 538 to 614 (TLTHELFDKK…MTETDYLSKI (77 aa)).

The protein belongs to the NAD-dependent DNA ligase family. LigA subfamily. Requires Mg(2+) as cofactor. The cofactor is Mn(2+).

The enzyme catalyses NAD(+) + (deoxyribonucleotide)n-3'-hydroxyl + 5'-phospho-(deoxyribonucleotide)m = (deoxyribonucleotide)n+m + AMP + beta-nicotinamide D-nucleotide.. Its function is as follows. DNA ligase that catalyzes the formation of phosphodiester linkages between 5'-phosphoryl and 3'-hydroxyl groups in double-stranded DNA using NAD as a coenzyme and as the energy source for the reaction. It is essential for DNA replication and repair of damaged DNA. This chain is DNA ligase, found in Ruthia magnifica subsp. Calyptogena magnifica.